The sequence spans 420 residues: 3-isopropylmalate dehydratase large subunit (420 aa).

3 residues coordinate [4Fe-4S] cluster: Cys-300, Cys-360, and Cys-363.

It belongs to the aconitase/IPM isomerase family. LeuC type 2 subfamily. In terms of assembly, heterodimer of LeuC and LeuD. Requires [4Fe-4S] cluster as cofactor.

The catalysed reaction is (2R,3S)-3-isopropylmalate = (2S)-2-isopropylmalate. The protein operates within amino-acid biosynthesis; L-leucine biosynthesis; L-leucine from 3-methyl-2-oxobutanoate: step 2/4. Its function is as follows. Catalyzes the isomerization between 2-isopropylmalate and 3-isopropylmalate, via the formation of 2-isopropylmaleate. The chain is 3-isopropylmalate dehydratase large subunit from Syntrophus aciditrophicus (strain SB).